The sequence spans 884 residues: Probable disease resistance protein At1g12290 (884 aa).

Positions 26-66 (LYYIQNIKENLTSLEEAMEDLKALRDDLLRKVQTAEEGGLQ) form a coiled coil. One can recognise an NB-ARC domain in the interval 139 to 443 (AHPATRAVGE…CEGFIDGDEN (305 aa)). Residue 182-189 (GMGGVGKT) participates in ATP binding. LRR repeat units lie at residues 519-540 (VVSR…PECP), 541-563 (KLTT…FFRS), 566-588 (RLVV…ISEL), 590-612 (SLRY…LKLK), 613-635 (KLMH…DHLS), and 644-664 (NLRM…ENLE).

This sequence belongs to the disease resistance NB-LRR family.

In terms of biological role, probable disease resistance protein. In Arabidopsis thaliana (Mouse-ear cress), this protein is Probable disease resistance protein At1g12290.